The primary structure comprises 331 residues: Glycerol-3-phosphate dehydrogenase [NAD(P)+] (331 aa).

Residues S11, F12, R32, and K106 each coordinate NADPH. Sn-glycerol 3-phosphate is bound by residues K106, G134, and S136. A138 contacts NADPH. K189, D242, S252, R253, and N254 together coordinate sn-glycerol 3-phosphate. Residue K189 is the Proton acceptor of the active site. R253 serves as a coordination point for NADPH. NADPH contacts are provided by V277 and E279.

Belongs to the NAD-dependent glycerol-3-phosphate dehydrogenase family.

The protein resides in the cytoplasm. The catalysed reaction is sn-glycerol 3-phosphate + NAD(+) = dihydroxyacetone phosphate + NADH + H(+). The enzyme catalyses sn-glycerol 3-phosphate + NADP(+) = dihydroxyacetone phosphate + NADPH + H(+). It participates in membrane lipid metabolism; glycerophospholipid metabolism. In terms of biological role, catalyzes the reduction of the glycolytic intermediate dihydroxyacetone phosphate (DHAP) to sn-glycerol 3-phosphate (G3P), the key precursor for phospholipid synthesis. The sequence is that of Glycerol-3-phosphate dehydrogenase [NAD(P)+] from Clostridium perfringens (strain ATCC 13124 / DSM 756 / JCM 1290 / NCIMB 6125 / NCTC 8237 / Type A).